Here is an 893-residue protein sequence, read N- to C-terminus: DNA gyrase subunit A (893 aa).

Residues 35 to 501 (LPDVRDGLKP…GLEDLEDEDL (467 aa)) form the Topo IIA-type catalytic domain. Tyr-123 functions as the O-(5'-phospho-DNA)-tyrosine intermediate in the catalytic mechanism. The GyrA-box motif lies at 528 to 534 (QNRGGRG). Positions 810–893 (VNEEDDNEEN…ASDNEEDSDE (84 aa)) are disordered. Acidic residues-rich tracts occupy residues 812 to 821 (EEDDNEENAD) and 852 to 862 (DAEMESVESPE). Basic and acidic residues predominate over residues 863–879 (NDDRIDIRQDFMDRVNE). Acidic residues predominate over residues 880–893 (DIESASDNEEDSDE).

The protein belongs to the type II topoisomerase GyrA/ParC subunit family. As to quaternary structure, heterotetramer, composed of two GyrA and two GyrB chains. In the heterotetramer, GyrA contains the active site tyrosine that forms a transient covalent intermediate with DNA, while GyrB binds cofactors and catalyzes ATP hydrolysis.

The protein localises to the cytoplasm. It carries out the reaction ATP-dependent breakage, passage and rejoining of double-stranded DNA.. Its function is as follows. A type II topoisomerase that negatively supercoils closed circular double-stranded (ds) DNA in an ATP-dependent manner to modulate DNA topology and maintain chromosomes in an underwound state. Negative supercoiling favors strand separation, and DNA replication, transcription, recombination and repair, all of which involve strand separation. Also able to catalyze the interconversion of other topological isomers of dsDNA rings, including catenanes and knotted rings. Type II topoisomerases break and join 2 DNA strands simultaneously in an ATP-dependent manner. The polypeptide is DNA gyrase subunit A (Staphylococcus epidermidis (strain ATCC 12228 / FDA PCI 1200)).